The chain runs to 227 residues: Guanylate kinase (227 aa).

Residues 21–199 (GNLFMVVAPS…ALAELECIVA (179 aa)) form the Guanylate kinase-like domain. Residue 28 to 35 (APSGAGKS) participates in ATP binding.

It belongs to the guanylate kinase family.

Its subcellular location is the cytoplasm. It carries out the reaction GMP + ATP = GDP + ADP. Its function is as follows. Essential for recycling GMP and indirectly, cGMP. The polypeptide is Guanylate kinase (Burkholderia mallei (strain ATCC 23344)).